A 150-amino-acid chain; its full sequence is Large ribosomal subunit protein bL9 (150 aa).

It belongs to the bacterial ribosomal protein bL9 family.

Functionally, binds to the 23S rRNA. The sequence is that of Large ribosomal subunit protein bL9 from Vibrio parahaemolyticus serotype O3:K6 (strain RIMD 2210633).